The following is a 324-amino-acid chain: Signal peptidase I (324 aa).

The Periplasmic segment spans residues 1 to 3 (MAN). The helical transmembrane segment at 4-22 (MFALILVIATLVTGILWCV) threads the bilayer. Residues 23-58 (DKFVFAPKRRARQAAAQTASGDALDNATLNKVAPKP) lie on the Cytoplasmic side of the membrane. The chain crosses the membrane as a helical span at residues 59–77 (GWLETGASVFPVLAIVLIV). Residues 78 to 324 (RSFLYEPFQI…VRLSRIGGIH (247 aa)) are Periplasmic-facing. Residues Ser-91 and Lys-146 contribute to the active site.

Belongs to the peptidase S26 family.

The protein localises to the cell inner membrane. The catalysed reaction is Cleavage of hydrophobic, N-terminal signal or leader sequences from secreted and periplasmic proteins.. This is Signal peptidase I (lepB) from Salmonella typhi.